Here is an 880-residue protein sequence, read N- to C-terminus: Alanine--tRNA ligase (880 aa).

Residues H566, H570, C668, and H672 each contribute to the Zn(2+) site.

The protein belongs to the class-II aminoacyl-tRNA synthetase family. The cofactor is Zn(2+).

The protein localises to the cytoplasm. The enzyme catalyses tRNA(Ala) + L-alanine + ATP = L-alanyl-tRNA(Ala) + AMP + diphosphate. In terms of biological role, catalyzes the attachment of alanine to tRNA(Ala) in a two-step reaction: alanine is first activated by ATP to form Ala-AMP and then transferred to the acceptor end of tRNA(Ala). Also edits incorrectly charged Ser-tRNA(Ala) and Gly-tRNA(Ala) via its editing domain. In Nostoc sp. (strain PCC 7120 / SAG 25.82 / UTEX 2576), this protein is Alanine--tRNA ligase.